Consider the following 339-residue polypeptide: Ketol-acid reductoisomerase (NADP(+)) (339 aa).

Positions methionine 1–threonine 182 constitute a KARI N-terminal Rossmann domain. NADP(+)-binding positions include tyrosine 24–glutamine 27, arginine 48, serine 51, threonine 53, and aspartate 83–glutamine 86. Residue histidine 108 is part of the active site. Glycine 134 serves as a coordination point for NADP(+). In terms of domain architecture, KARI C-terminal knotted spans threonine 183–isoleucine 328. Aspartate 191, glutamate 195, glutamate 227, and glutamate 231 together coordinate Mg(2+). Serine 252 serves as a coordination point for substrate.

Belongs to the ketol-acid reductoisomerase family. Requires Mg(2+) as cofactor.

The enzyme catalyses (2R)-2,3-dihydroxy-3-methylbutanoate + NADP(+) = (2S)-2-acetolactate + NADPH + H(+). It catalyses the reaction (2R,3R)-2,3-dihydroxy-3-methylpentanoate + NADP(+) = (S)-2-ethyl-2-hydroxy-3-oxobutanoate + NADPH + H(+). It functions in the pathway amino-acid biosynthesis; L-isoleucine biosynthesis; L-isoleucine from 2-oxobutanoate: step 2/4. Its pathway is amino-acid biosynthesis; L-valine biosynthesis; L-valine from pyruvate: step 2/4. Involved in the biosynthesis of branched-chain amino acids (BCAA). Catalyzes an alkyl-migration followed by a ketol-acid reduction of (S)-2-acetolactate (S2AL) to yield (R)-2,3-dihydroxy-isovalerate. In the isomerase reaction, S2AL is rearranged via a Mg-dependent methyl migration to produce 3-hydroxy-3-methyl-2-ketobutyrate (HMKB). In the reductase reaction, this 2-ketoacid undergoes a metal-dependent reduction by NADPH to yield (R)-2,3-dihydroxy-isovalerate. In Brucella abortus (strain S19), this protein is Ketol-acid reductoisomerase (NADP(+)).